The chain runs to 346 residues: 3-dehydroquinate synthase (346 aa).

Residues 61 to 66, 95 to 99, 119 to 120, lysine 132, and lysine 141 contribute to the NAD(+) site; these read DGEAYK, GVIGD, and TT. Residues glutamate 174, histidine 233, and histidine 250 each coordinate Zn(2+).

It belongs to the sugar phosphate cyclases superfamily. Dehydroquinate synthase family. It depends on NAD(+) as a cofactor. Co(2+) is required as a cofactor. The cofactor is Zn(2+).

The protein resides in the cytoplasm. The catalysed reaction is 7-phospho-2-dehydro-3-deoxy-D-arabino-heptonate = 3-dehydroquinate + phosphate. It functions in the pathway metabolic intermediate biosynthesis; chorismate biosynthesis; chorismate from D-erythrose 4-phosphate and phosphoenolpyruvate: step 2/7. Functionally, catalyzes the conversion of 3-deoxy-D-arabino-heptulosonate 7-phosphate (DAHP) to dehydroquinate (DHQ). In Wolinella succinogenes (strain ATCC 29543 / DSM 1740 / CCUG 13145 / JCM 31913 / LMG 7466 / NCTC 11488 / FDC 602W) (Vibrio succinogenes), this protein is 3-dehydroquinate synthase.